Consider the following 137-residue polypeptide: Large ribosomal subunit protein uL16c (137 aa).

The protein belongs to the universal ribosomal protein uL16 family. Part of the 50S ribosomal subunit.

Its subcellular location is the plastid. The protein resides in the chloroplast. In Rhodomonas salina (Cryptomonas salina), this protein is Large ribosomal subunit protein uL16c.